We begin with the raw amino-acid sequence, 210 residues long: UPF0637 protein RBAM_014510 (210 aa).

Belongs to the UPF0637 family.

This Bacillus velezensis (strain DSM 23117 / BGSC 10A6 / LMG 26770 / FZB42) (Bacillus amyloliquefaciens subsp. plantarum) protein is UPF0637 protein RBAM_014510.